A 147-amino-acid chain; its full sequence is DNA base-flipping protein (147 aa).

It belongs to the MGMT family. ATL subfamily. Interacts with several proteins, including UvrA, UvrD and the three subunits of the RNA polymerase.

Functionally, involved in DNA damage recognition. Binds DNA containing O(6)-methylguanine and larger O(6)-alkylguanine adducts. Binds to the damaged base and flips the base out of the DNA duplex into an extrahelical conformation, which allows processing by repair proteins. Also affects the regulation of gene expression in response to alkylation. This is DNA base-flipping protein from Thermus thermophilus (strain ATCC 27634 / DSM 579 / HB8).